The chain runs to 239 residues: Ribonuclease 3 (239 aa).

One can recognise an RNase III domain in the interval 12–137 (ISRLEALIGY…LIATLYLDGG (126 aa)). E50 contacts Mg(2+). Residue D54 is part of the active site. D123 and E126 together coordinate Mg(2+). E126 is a catalytic residue. The 70-residue stretch at 162–231 (DAKTELQEWA…ATRLLEREGV (70 aa)) folds into the DRBM domain.

This sequence belongs to the ribonuclease III family. Homodimer. The cofactor is Mg(2+).

It is found in the cytoplasm. The enzyme catalyses Endonucleolytic cleavage to 5'-phosphomonoester.. Its function is as follows. Digests double-stranded RNA. Involved in the processing of primary rRNA transcript to yield the immediate precursors to the large and small rRNAs (23S and 16S). Processes some mRNAs, and tRNAs when they are encoded in the rRNA operon. Processes pre-crRNA and tracrRNA of type II CRISPR loci if present in the organism. The protein is Ribonuclease 3 of Agrobacterium fabrum (strain C58 / ATCC 33970) (Agrobacterium tumefaciens (strain C58)).